A 565-amino-acid polypeptide reads, in one-letter code: O-fucosyltransferase 7 (565 aa).

A helical; Signal-anchor for type II membrane protein membrane pass occupies residues 17–37 (VLIWAICVMTLLCFLTVHIYV). 5 N-linked (GlcNAc...) asparagine glycosylation sites follow: Asn62, Asn73, Asn104, Asn124, and Asn190. Residue 327–329 (HLR) coordinates substrate. A glycan (N-linked (GlcNAc...) asparagine) is linked at Asn441. Residues 515–565 (NEIHKTRQGSPRRRKGPASGTKGLERHRSEESFYENPLPDCLCQRDPSKAR) form a disordered region. A compositionally biased stretch (basic residues) spans 520–530 (TRQGSPRRRKG).

Belongs to the glycosyltransferase GT106 family.

The protein localises to the membrane. It functions in the pathway glycan metabolism. The chain is O-fucosyltransferase 7 from Arabidopsis thaliana (Mouse-ear cress).